The chain runs to 497 residues: Cytochrome P450 71A20 (497 aa).

The helical transmembrane segment at 3-23 (MILITLCLTTLLALLLKSILK) threads the bilayer. Residue Cys-440 coordinates heme.

This sequence belongs to the cytochrome P450 family. It depends on heme as a cofactor.

The protein localises to the membrane. This is Cytochrome P450 71A20 (CYP71A20) from Arabidopsis thaliana (Mouse-ear cress).